We begin with the raw amino-acid sequence, 381 residues long: Hydrogenase nickel incorporation protein HupN (381 aa).

The Cytoplasmic portion of the chain corresponds to 1–39 (MLPFSMTGLEKDHTRGVLILANAHRRSERSRTASCAGPA). Residues 40–60 (VLFGGLITANIVAWAWAFALF) traverse the membrane as a helical segment. Topologically, residues 61 to 63 (ADR) are periplasmic. Residues 64 to 84 (PVVMATALLAWVFGLRHAVDA) form a helical membrane-spanning segment. At 85–110 (DHIAAIDNVVRSLMQTGGTPRSAGLY) the chain is on the cytoplasmic side. The helical transmembrane segment at 111–131 (FALGHSSVVVVATMLLALGVV) threads the bilayer. Residues 132–149 (SLGGDGLLKEIGSFIGAS) lie on the Periplasmic side of the membrane. The chain crosses the membrane as a helical span at residues 150-170 (VSALFLLVIAAINLAIFASLW). The Cytoplasmic portion of the chain corresponds to 171–215 (RTFRKAREQGIRDAAGLDALLAHRGILVRLLGPMFRLVTKPWHMY). A helical transmembrane segment spans residues 216–236 (PLGFLFGLGFDTATEIGLLSI). Residues 237-243 (SASEAAR) lie on the Periplasmic side of the membrane. The helical transmembrane segment at 244-264 (GASLADVMVFPALFAAGMALV) threads the bilayer. Residues 265 to 292 (DTADSTLMVSAYRWAFVDPMRKLWYNLT) lie on the Cytoplasmic side of the membrane. A helical transmembrane segment spans residues 293–313 (ITGASVAVALFIGGIEALGLI). The Periplasmic portion of the chain corresponds to 314–333 (GNRLDLSGGVWTLIDALNES). The chain crosses the membrane as a helical span at residues 334–354 (LANVGLAVIALFAIAWLLSIV). Residues 355-381 (LYRRLIAGSSGLADTEVLECADATEAV) lie on the Cytoplasmic side of the membrane.

This sequence belongs to the NiCoT transporter (TC 2.A.52) family.

The protein localises to the cell inner membrane. Its function is as follows. Involved in nickel incorporation/metabolism into the hydrogenase apoprotein. This Bradyrhizobium diazoefficiens (strain JCM 10833 / BCRC 13528 / IAM 13628 / NBRC 14792 / USDA 110) protein is Hydrogenase nickel incorporation protein HupN (hupN).